We begin with the raw amino-acid sequence, 710 residues long: DNA ligase (710 aa).

Residues 1–36 are disordered; the sequence is MTSSSPRHADPDENPYVEAPPTDFEPVGALSEDEAT. Residues 63–67, 111–112, and Glu147 each bind NAD(+); these read DETYD and SI. The active-site N6-AMP-lysine intermediate is Lys149. NAD(+)-binding residues include Arg170, Glu206, and Lys353. Cys444, Cys447, Cys460, and Cys466 together coordinate Zn(2+). Residues 623–710 form the BRCT domain; that stretch reads ETGDALDGLT…ERGVAWPPEE (88 aa). Residues 657-689 form a disordered region; that stretch reads ATSSVSGNTDYLVAGESPGRSKRDDADAEGVPV.

It belongs to the NAD-dependent DNA ligase family. LigA subfamily. The cofactor is Mg(2+). Mn(2+) is required as a cofactor.

It carries out the reaction NAD(+) + (deoxyribonucleotide)n-3'-hydroxyl + 5'-phospho-(deoxyribonucleotide)m = (deoxyribonucleotide)n+m + AMP + beta-nicotinamide D-nucleotide.. Its function is as follows. DNA ligase that catalyzes the formation of phosphodiester linkages between 5'-phosphoryl and 3'-hydroxyl groups in double-stranded DNA using NAD as a coenzyme and as the energy source for the reaction. It is essential for DNA replication and repair of damaged DNA. This Halorubrum lacusprofundi (strain ATCC 49239 / DSM 5036 / JCM 8891 / ACAM 34) protein is DNA ligase.